A 427-amino-acid chain; its full sequence is 3-phosphoshikimate 1-carboxyvinyltransferase (427 aa).

Lys-22, Ser-23, and Arg-27 together coordinate 3-phosphoshikimate. Phosphoenolpyruvate is bound at residue Lys-22. Phosphoenolpyruvate-binding residues include Gly-96 and Arg-124. 7 residues coordinate 3-phosphoshikimate: Ser-169, Ser-170, Gln-171, Ser-197, Asp-313, Asn-336, and Lys-340. Gln-171 is a phosphoenolpyruvate binding site. Catalysis depends on Asp-313, which acts as the Proton acceptor. Phosphoenolpyruvate-binding residues include Arg-344, Arg-386, and Lys-411.

It belongs to the EPSP synthase family. In terms of assembly, monomer.

It is found in the cytoplasm. It carries out the reaction 3-phosphoshikimate + phosphoenolpyruvate = 5-O-(1-carboxyvinyl)-3-phosphoshikimate + phosphate. Its pathway is metabolic intermediate biosynthesis; chorismate biosynthesis; chorismate from D-erythrose 4-phosphate and phosphoenolpyruvate: step 6/7. Catalyzes the transfer of the enolpyruvyl moiety of phosphoenolpyruvate (PEP) to the 5-hydroxyl of shikimate-3-phosphate (S3P) to produce enolpyruvyl shikimate-3-phosphate and inorganic phosphate. This chain is 3-phosphoshikimate 1-carboxyvinyltransferase, found in Salmonella dublin (strain CT_02021853).